The primary structure comprises 143 residues: Large ribosomal subunit protein uL11 (143 aa).

It belongs to the universal ribosomal protein uL11 family. As to quaternary structure, part of the ribosomal stalk of the 50S ribosomal subunit. Interacts with L10 and the large rRNA to form the base of the stalk. L10 forms an elongated spine to which L12 dimers bind in a sequential fashion forming a multimeric L10(L12)X complex. In terms of processing, one or more lysine residues are methylated.

Forms part of the ribosomal stalk which helps the ribosome interact with GTP-bound translation factors. The chain is Large ribosomal subunit protein uL11 from Pseudomonas paraeruginosa (strain DSM 24068 / PA7) (Pseudomonas aeruginosa (strain PA7)).